Here is a 567-residue protein sequence, read N- to C-terminus: Cytochrome P450 monooxygenase 79 (567 aa).

A helical membrane pass occupies residues 7–24 (ELAILAIVLLVTAVVFYT). N-linked (GlcNAc...) asparagine glycans are attached at residues Asn-223 and Asn-279. A heme-binding site is contributed by Cys-475.

The protein belongs to the cytochrome P450 family. It depends on heme as a cofactor.

It is found in the membrane. It functions in the pathway secondary metabolite biosynthesis. Cytochrome P450 monooxygenase that is able to use dehydroabietic acid as a substrate for oxidation. This is Cytochrome P450 monooxygenase 79 from Postia placenta (strain ATCC 44394 / Madison 698-R) (Brown rot fungus).